Consider the following 250-residue polypeptide: DNA polymerase sliding clamp (250 aa).

It belongs to the PCNA family. Homotrimer. The subunits circularize to form a toroid; DNA passes through its center. Replication factor C (RFC) is required to load the toroid on the DNA.

Sliding clamp subunit that acts as a moving platform for DNA processing. Responsible for tethering the catalytic subunit of DNA polymerase and other proteins to DNA during high-speed replication. The polypeptide is DNA polymerase sliding clamp (Methanococcus maripaludis (strain DSM 14266 / JCM 13030 / NBRC 101832 / S2 / LL)).